The sequence spans 254 residues: 23S rRNA (guanosine-2'-O-)-methyltransferase RlmB (254 aa).

S-adenosyl-L-methionine-binding residues include Gly198, Ile218, and Leu227.

It belongs to the class IV-like SAM-binding methyltransferase superfamily. RNA methyltransferase TrmH family. RlmB subfamily. In terms of assembly, homodimer.

It localises to the cytoplasm. It carries out the reaction guanosine(2251) in 23S rRNA + S-adenosyl-L-methionine = 2'-O-methylguanosine(2251) in 23S rRNA + S-adenosyl-L-homocysteine + H(+). Its function is as follows. Specifically methylates the ribose of guanosine 2251 in 23S rRNA. This is 23S rRNA (guanosine-2'-O-)-methyltransferase RlmB from Blochmanniella floridana.